The following is an 830-amino-acid chain: Pentatricopeptide repeat-containing protein At5g55740, chloroplastic (830 aa).

A chloroplast-targeting transit peptide spans 1 to 59; it reads MASLPFNTIPNKVPFSVSSKPSSKHHDEQAHSPSSTSYFHRVSSLCKNGEIKEALSLVT. Positions 15 to 36 are disordered; sequence FSVSSKPSSKHHDEQAHSPSST. PPR repeat units follow at residues 69-103, 106-136, 137-171, 172-206, 207-237, 238-272, 273-307, 308-338, 339-373, 374-408, 409-439, 440-474, 475-509, 510-544, 545-575, 581-611, 612-646, 647-682, and 683-713; these read GPEIYGEILQGCVYERDLSTGKQIHARILKNGDFY, NEYIETKLVIFYAKCDALEIAEVLFSKLRVR, NVFSWAAIIGVKCRIGLCEGALMGFVEMLENEIFP, DNFVVPNVCKACGALKWSRFGRGVHGYVVKSGLED, CVFVASSLADMYGKCGVLDDASKVFDEIPDR, NAVAWNALMVGYVQNGKNEEAIRLFSDMRKQGVEP, TRVTVSTCLSASANMGGVEEGKQSHAIAIVNGMEL, DNILGTSLLNFYCKVGLIEYAEMVFDRMFEK, DVVTWNLIISGYVQQGLVEDAIYMCQLMRLEKLKY, DCVTLATLMSAAARTENLKLGKEVQCYCIRHSFES, DIVLASTVMDMYAKCGSIVDAKKVFDSTVEK, DLILWNTLLAAYAESGLSGEALRLFYGMQLEGVPP, NVITWNLIILSLLRNGQVDEAKDMFLQMQSSGIIP, NLISWTTMMNGMVQNGCSEEAILFLRKMQESGLRP, NAFSITVALSACAHLASLHIGRTIHGYIIRN, LVSIETSLVDMYAKCGDINKAEKVFGSKLYS, ELPLSNAMISAYALYGNLKEAIALYRSLEGVGLKP, DNITITNVLSACNHAGDINQAIEIFTDIVSKRSMKP, and CLEHYGLMVDLLASAGETEKALRLIEEMPFK. Residues 718–793 are type E motif; the sequence is MIQSLVASCN…KPGCSWIQIT (76 aa). The segment at 796-826 is type E(+) motif; it reads EGVHVFVANDKTHTRINEIQMMLALLLYDMG.

It belongs to the PPR family. PCMP-E subfamily.

The protein localises to the plastid. It is found in the chloroplast. Its function is as follows. Plays a major role in chloroplast RNA editing. Acts as a site-recognition transacting factor involved in the edition of the site 2 of ndhD (ndhD-2), which encodes a subunit of the NDH complex. This is Pentatricopeptide repeat-containing protein At5g55740, chloroplastic (CRR21) from Arabidopsis thaliana (Mouse-ear cress).